We begin with the raw amino-acid sequence, 257 residues long: Putative hydro-lyase Bphy_2364 (257 aa).

It belongs to the D-glutamate cyclase family.

The sequence is that of Putative hydro-lyase Bphy_2364 from Paraburkholderia phymatum (strain DSM 17167 / CIP 108236 / LMG 21445 / STM815) (Burkholderia phymatum).